Consider the following 129-residue polypeptide: Large ribosomal subunit protein bL21 (129 aa).

Belongs to the bacterial ribosomal protein bL21 family. In terms of assembly, part of the 50S ribosomal subunit. Contacts protein L20.

In terms of biological role, this protein binds to 23S rRNA in the presence of protein L20. This is Large ribosomal subunit protein bL21 from Prochlorococcus marinus (strain MIT 9313).